The sequence spans 87 residues: MAEANTMRRTATGKVISNKGDKTITVLVERRVQHPIYGKIIKRSTKLMAHDEENQCREGDLVTIEECRPLSKRKAWMLVNVVEQSKA.

This sequence belongs to the universal ribosomal protein uS17 family. As to quaternary structure, part of the 30S ribosomal subunit.

Functionally, one of the primary rRNA binding proteins, it binds specifically to the 5'-end of 16S ribosomal RNA. The chain is Small ribosomal subunit protein uS17 from Alcanivorax borkumensis (strain ATCC 700651 / DSM 11573 / NCIMB 13689 / SK2).